A 208-amino-acid chain; its full sequence is Putative ankyrin repeat protein Ta0196 (208 aa).

ANK repeat units follow at residues 49–78, 82–111, 115–144, and 148–177; these read YQRNALMISAMYGRTDLIEFFAARYDHIDD, EGNTALMWAVRNNRMESAKSLIALKCSIDI, AGNTPICWAVIFGYTDMVKLLISSGANINI, and EGDTPAILASKYGRSECLKMLIEAGCDLNA.

The sequence is that of Putative ankyrin repeat protein Ta0196 from Thermoplasma acidophilum (strain ATCC 25905 / DSM 1728 / JCM 9062 / NBRC 15155 / AMRC-C165).